Reading from the N-terminus, the 174-residue chain is Gamma-crystallin C (174 aa).

Beta/gamma crystallin 'Greek key' domains follow at residues G2–S40 and G41–P83. C23 carries the post-translational modification S-methylcysteine. Residues Q84–S87 form a connecting peptide region. Beta/gamma crystallin 'Greek key' domains follow at residues H88–E128 and G129–V171.

Belongs to the beta/gamma-crystallin family. As to quaternary structure, monomer.

In terms of biological role, crystallins are the dominant structural components of the vertebrate eye lens. This is Gamma-crystallin C (CRYGC) from Canis lupus familiaris (Dog).